A 177-amino-acid polypeptide reads, in one-letter code: UPF0102 protein BPP4042 (177 aa).

The interval 13–43 is disordered; the sequence is AAQAQRRLHRRPPASPRASPGARDGGSPTQR.

Belongs to the UPF0102 family.

The polypeptide is UPF0102 protein BPP4042 (Bordetella parapertussis (strain 12822 / ATCC BAA-587 / NCTC 13253)).